Consider the following 629-residue polypeptide: DNA topoisomerase 4 subunit B (629 aa).

Residues Tyr-4, Asn-41, Asp-68, 109–115 (GLHGVGI), and Lys-333 contribute to the ATP site. The 114-residue stretch at 411 to 524 (AELFLVEGDS…AGHVYVAMPP (114 aa)) folds into the Toprim domain. Mg(2+) contacts are provided by Glu-417, Asp-489, and Asp-491.

This sequence belongs to the type II topoisomerase family. ParE type 1 subfamily. In terms of assembly, heterotetramer composed of ParC and ParE. It depends on Mg(2+) as a cofactor. Mn(2+) is required as a cofactor. Ca(2+) serves as cofactor.

It carries out the reaction ATP-dependent breakage, passage and rejoining of double-stranded DNA.. Topoisomerase IV is essential for chromosome segregation. It relaxes supercoiled DNA. Performs the decatenation events required during the replication of a circular DNA molecule. The chain is DNA topoisomerase 4 subunit B from Pseudomonas aeruginosa (strain ATCC 15692 / DSM 22644 / CIP 104116 / JCM 14847 / LMG 12228 / 1C / PRS 101 / PAO1).